Reading from the N-terminus, the 400-residue chain is Glycerol-3-phosphate dehydrogenase [NAD(+)] 1, chloroplastic (400 aa).

Residues methionine 1–serine 32 constitute a chloroplast transit peptide. NAD(+) is bound by residues glycine 61–glycine 66, phenylalanine 92, phenylalanine 149, lysine 172, and alanine 205. Lysine 172 serves as a coordination point for substrate. Lysine 257 acts as the Proton acceptor in catalysis. Residues arginine 321, lysine 350, and glutamine 352 each contribute to the NAD(+) site. Substrate is bound at residue arginine 321–asparagine 322.

It belongs to the NAD-dependent glycerol-3-phosphate dehydrogenase family. In terms of tissue distribution, expressed in young seedlings, flowers and siliques. Expressed at low levels in roots.

It is found in the plastid. It localises to the chloroplast. It carries out the reaction sn-glycerol 3-phosphate + NAD(+) = dihydroxyacetone phosphate + NADH + H(+). It functions in the pathway membrane lipid metabolism; glycerophospholipid metabolism. Functionally, involved in glycerolipid metabolism. This is Glycerol-3-phosphate dehydrogenase [NAD(+)] 1, chloroplastic (DHAPRD) from Arabidopsis thaliana (Mouse-ear cress).